The chain runs to 292 residues: NAD kinase (292 aa).

D73 (proton acceptor) is an active-site residue. NAD(+) contacts are provided by residues 73–74 (DG), 147–148 (NE), H158, R175, D177, 188–193 (TGYSLS), and Q248.

Belongs to the NAD kinase family. The cofactor is a divalent metal cation.

Its subcellular location is the cytoplasm. It catalyses the reaction NAD(+) + ATP = ADP + NADP(+) + H(+). Involved in the regulation of the intracellular balance of NAD and NADP, and is a key enzyme in the biosynthesis of NADP. Catalyzes specifically the phosphorylation on 2'-hydroxyl of the adenosine moiety of NAD to yield NADP. In Buchnera aphidicola subsp. Baizongia pistaciae (strain Bp), this protein is NAD kinase.